The primary structure comprises 315 residues: Mitochondrial glycine transporter (315 aa).

3 Solcar repeats span residues 19–102 (SKTT…LRTG), 125–206 (TANL…LKRR), and 221–305 (KSSS…LILR). The next 6 membrane-spanning stretches (helical) occupy residues 25–50 (FTAG…TRVQ), 77–103 (GTLP…RTGL), 128–153 (LATG…VRYE), 181–204 (GFGA…EQLK), 225–251 (INFV…KTRL), and 280–298 (GLGL…AWTV).

It belongs to the mitochondrial carrier (TC 2.A.29) family. SLC25A38 subfamily.

Its subcellular location is the mitochondrion inner membrane. The enzyme catalyses glycine(in) = glycine(out). Its function is as follows. Mitochondrial glycine transporter that imports glycine into the mitochondrial matrix. Plays an important role in providing glycine for the first enzymatic step in heme biosynthesis, the condensation of glycine with succinyl-CoA to produce 5-aminolevulinate (ALA) in the mitochondrial matrix. The polypeptide is Mitochondrial glycine transporter (Aspergillus niger (strain ATCC MYA-4892 / CBS 513.88 / FGSC A1513)).